A 198-amino-acid chain; its full sequence is FMN-dependent NADH:quinone oxidoreductase (198 aa).

Residues S9 and M95–F98 contribute to the FMN site.

This sequence belongs to the azoreductase type 1 family. In terms of assembly, homodimer. Requires FMN as cofactor.

The catalysed reaction is 2 a quinone + NADH + H(+) = 2 a 1,4-benzosemiquinone + NAD(+). It carries out the reaction N,N-dimethyl-1,4-phenylenediamine + anthranilate + 2 NAD(+) = 2-(4-dimethylaminophenyl)diazenylbenzoate + 2 NADH + 2 H(+). Functionally, quinone reductase that provides resistance to thiol-specific stress caused by electrophilic quinones. In terms of biological role, also exhibits azoreductase activity. Catalyzes the reductive cleavage of the azo bond in aromatic azo compounds to the corresponding amines. The chain is FMN-dependent NADH:quinone oxidoreductase from Alcanivorax borkumensis (strain ATCC 700651 / DSM 11573 / NCIMB 13689 / SK2).